The following is a 378-amino-acid chain: Cytochrome b (378 aa).

The next 4 helical transmembrane spans lie at Phe34–Met54, Trp78–Val99, Trp114–Leu134, and Phe179–Leu199. 2 residues coordinate heme b: His84 and His98. Positions 183 and 197 each coordinate heme b. His202 contributes to the a ubiquinone binding site. The next 4 membrane-spanning stretches (helical) occupy residues Phe227–Ser247, Leu289–Asn309, Ile321–Ala341, and Tyr348–Leu368.

Belongs to the cytochrome b family. In terms of assembly, the main subunits of complex b-c1 are: cytochrome b, cytochrome c1 and the Rieske protein. It depends on heme b as a cofactor.

It is found in the mitochondrion inner membrane. Functionally, component of the ubiquinol-cytochrome c reductase complex (complex III or cytochrome b-c1 complex) that is part of the mitochondrial respiratory chain. The b-c1 complex mediates electron transfer from ubiquinol to cytochrome c. Contributes to the generation of a proton gradient across the mitochondrial membrane that is then used for ATP synthesis. The protein is Cytochrome b (mt:Cyt-b) of Drosophila melanogaster (Fruit fly).